We begin with the raw amino-acid sequence, 464 residues long: NADH dehydrogenase [ubiquinone] flavoprotein 1, mitochondrial (464 aa).

A mitochondrion-targeting transit peptide spans 1-20 (MLAARRLLGWSLPARVSVRF). Lysine 81 carries the post-translational modification N6-acetyllysine; alternate. An N6-succinyllysine; alternate modification is found at lysine 81. An NADH-binding site is contributed by 87-96 (GRGGAGFPTG). The residue at position 104 (lysine 104) is an N6-acetyllysine. 199-247 (RGAGAYICGEETALIESIEGKQGKPRLKPPFPADVGVFGCPTTVANVET) is a binding site for FMN. An Omega-N-methylarginine modification is found at arginine 257. Lysine 375 carries the post-translational modification N6-acetyllysine. [4Fe-4S] cluster is bound by residues cysteine 379, cysteine 382, cysteine 385, and cysteine 425.

It belongs to the complex I 51 kDa subunit family. In terms of assembly, core subunit of respiratory chain NADH dehydrogenase (Complex I) which is composed of 45 different subunits. This is a component of the flavoprotein-sulfur (FP) fragment of the enzyme. Interacts with RAB5IF. FMN serves as cofactor. It depends on [4Fe-4S] cluster as a cofactor.

Its subcellular location is the mitochondrion inner membrane. The catalysed reaction is a ubiquinone + NADH + 5 H(+)(in) = a ubiquinol + NAD(+) + 4 H(+)(out). Its function is as follows. Core subunit of the mitochondrial membrane respiratory chain NADH dehydrogenase (Complex I) which catalyzes electron transfer from NADH through the respiratory chain, using ubiquinone as an electron acceptor. Part of the peripheral arm of the enzyme, where the electrons from NADH are accepted by flavin mononucleotide (FMN) and then passed along a chain of iron-sulfur clusters by electron tunnelling to the final acceptor ubiquinone. Contains FMN, which is the initial electron acceptor as well as one iron-sulfur cluster. This is NADH dehydrogenase [ubiquinone] flavoprotein 1, mitochondrial from Pongo pygmaeus (Bornean orangutan).